The chain runs to 124 residues: S-adenosylmethionine decarboxylase proenzyme (124 aa).

Ser63 functions as the Schiff-base intermediate with substrate; via pyruvic acid in the catalytic mechanism. Ser63 carries the post-translational modification Pyruvic acid (Ser); by autocatalysis. His68 acts as the Proton acceptor; for processing activity in catalysis. Cys83 serves as the catalytic Proton donor; for catalytic activity.

The protein belongs to the prokaryotic AdoMetDC family. Type 1 subfamily. Heterotetramer of two alpha and two beta chains arranged as a dimer of alpha/beta heterodimers. Requires pyruvate as cofactor. Post-translationally, is synthesized initially as an inactive proenzyme. Formation of the active enzyme involves a self-maturation process in which the active site pyruvoyl group is generated from an internal serine residue via an autocatalytic post-translational modification. Two non-identical subunits are generated from the proenzyme in this reaction, and the pyruvate is formed at the N-terminus of the alpha chain, which is derived from the carboxyl end of the proenzyme. The post-translation cleavage follows an unusual pathway, termed non-hydrolytic serinolysis, in which the side chain hydroxyl group of the serine supplies its oxygen atom to form the C-terminus of the beta chain, while the remainder of the serine residue undergoes an oxidative deamination to produce ammonia and the pyruvoyl group blocking the N-terminus of the alpha chain.

It catalyses the reaction S-adenosyl-L-methionine + H(+) = S-adenosyl 3-(methylsulfanyl)propylamine + CO2. It functions in the pathway amine and polyamine biosynthesis; S-adenosylmethioninamine biosynthesis; S-adenosylmethioninamine from S-adenosyl-L-methionine: step 1/1. Its function is as follows. Catalyzes the decarboxylation of S-adenosylmethionine to S-adenosylmethioninamine (dcAdoMet), the propylamine donor required for the synthesis of the polyamines spermine and spermidine from the diamine putrescine. The chain is S-adenosylmethionine decarboxylase proenzyme from Thermoanaerobacter pseudethanolicus (strain ATCC 33223 / 39E) (Clostridium thermohydrosulfuricum).